A 154-amino-acid polypeptide reads, in one-letter code: Cyanate hydratase (154 aa).

Residues arginine 100, glutamate 103, and serine 126 contribute to the active site.

It belongs to the cyanase family.

The enzyme catalyses cyanate + hydrogencarbonate + 3 H(+) = NH4(+) + 2 CO2. Its function is as follows. Catalyzes the reaction of cyanate with bicarbonate to produce ammonia and carbon dioxide. The polypeptide is Cyanate hydratase (Aspergillus fumigatus (strain CBS 144.89 / FGSC A1163 / CEA10) (Neosartorya fumigata)).